Reading from the N-terminus, the 144-residue chain is Large ribosomal subunit protein uL15 (144 aa).

The disordered stretch occupies residues 1–50 (MRLNTLSPAAGAKSAKKRVGRGIGSGLGKTGGRGVKGAGSRSGGGVRAGF). The segment covering 21 to 50 (RGIGSGLGKTGGRGVKGAGSRSGGGVRAGF) has biased composition (gly residues).

It belongs to the universal ribosomal protein uL15 family. Part of the 50S ribosomal subunit.

Binds to the 23S rRNA. This chain is Large ribosomal subunit protein uL15, found in Tolumonas auensis (strain DSM 9187 / NBRC 110442 / TA 4).